A 415-amino-acid chain; its full sequence is Peptide chain release factor subunit 1-2 (415 aa).

It belongs to the eukaryotic release factor 1 family. In terms of assembly, heterodimer of two subunits, one of which binds GTP.

The protein localises to the cytoplasm. Its function is as follows. Directs the termination of nascent peptide synthesis (translation) in response to the termination codons UAA, UAG and UGA. The protein is Peptide chain release factor subunit 1-2 of Methanosarcina acetivorans (strain ATCC 35395 / DSM 2834 / JCM 12185 / C2A).